The sequence spans 465 residues: CCA-adding enzyme (465 aa).

The ATP site is built by serine 63 and lysine 66. CTP-binding residues include serine 63 and lysine 66. Mg(2+) contacts are provided by glutamate 75, aspartate 77, and aspartate 127. Residues histidine 149, lysine 171, and tyrosine 180 each coordinate ATP. Histidine 149, lysine 171, and tyrosine 180 together coordinate CTP.

This sequence belongs to the tRNA nucleotidyltransferase/poly(A) polymerase family. Archaeal CCA-adding enzyme subfamily. As to quaternary structure, homodimer. Mg(2+) is required as a cofactor.

It catalyses the reaction a tRNA precursor + 2 CTP + ATP = a tRNA with a 3' CCA end + 3 diphosphate. The enzyme catalyses a tRNA with a 3' CCA end + 2 CTP + ATP = a tRNA with a 3' CCACCA end + 3 diphosphate. Catalyzes the addition and repair of the essential 3'-terminal CCA sequence in tRNAs without using a nucleic acid template. Adds these three nucleotides in the order of C, C, and A to the tRNA nucleotide-73, using CTP and ATP as substrates and producing inorganic pyrophosphate. tRNA 3'-terminal CCA addition is required both for tRNA processing and repair. Also involved in tRNA surveillance by mediating tandem CCA addition to generate a CCACCA at the 3' terminus of unstable tRNAs. While stable tRNAs receive only 3'-terminal CCA, unstable tRNAs are marked with CCACCA and rapidly degraded. The polypeptide is CCA-adding enzyme (Aeropyrum pernix (strain ATCC 700893 / DSM 11879 / JCM 9820 / NBRC 100138 / K1)).